Here is a 756-residue protein sequence, read N- to C-terminus: Lysyl oxidase homolog 4 (756 aa).

A signal peptide spans 1-24 (MAWSPPATLFLFLLLLGQPPPSRP). 4 SRCR domains span residues 32-133 (LRLV…VICH), 159-287 (VRLK…VSCV), 311-411 (VRLR…VRCN), and 421-529 (VRLA…VSCM). 17 cysteine pairs are disulfide-bonded: Cys-58–Cys-122, Cys-71–Cys-132, Cys-102–Cys-112, Cys-191–Cys-276, Cys-204–Cys-286, Cys-251–Cys-261, Cys-336–Cys-400, Cys-349–Cys-410, Cys-380–Cys-390, Cys-450–Cys-515, Cys-463–Cys-528, Cys-497–Cys-507, Cys-558–Cys-564, Cys-610–Cys-658, Cys-642–Cys-648, Cys-670–Cys-680, and Cys-717–Cys-731. N-linked (GlcNAc...) asparagine glycosylation occurs at Asn-198. The lysyl-oxidase like stretch occupies residues 533 to 736 (PDLVMNAQLV…WLHNCHTGNS (204 aa)). 3 residues coordinate Cu cation: His-611, His-613, and His-615. Residue Asn-629 is glycosylated (N-linked (GlcNAc...) asparagine). A cross-link (lysine tyrosylquinone (Lys-Tyr)) is located at residues 638-674 (KASFCLEDTNCPTGLQRRYACANFGEQGVTVGCWDTY). Tyr-674 bears the 2',4',5'-topaquinone mark.

Belongs to the lysyl oxidase family. Requires Cu cation as cofactor. The cofactor is lysine tyrosylquinone residue. Post-translationally, the lysine tyrosylquinone cross-link (LTQ) is generated by condensation of the epsilon-amino group of a lysine with a topaquinone produced by oxidation of tyrosine. May be proteolytically cleaved by BMP1. Expressed in many tissues, the highest levels among the tissues studied being in the skeletal muscle, testis and pancreas. Expressed in cartilage.

It is found in the secreted. Its subcellular location is the extracellular space. The catalysed reaction is L-lysyl-[protein] + O2 + H2O = (S)-2-amino-6-oxohexanoyl-[protein] + H2O2 + NH4(+). Its activity is regulated as follows. Inhibited by beta-aminopropionitrile (BAPN). Catalyzes the oxidative deamination of lysine and hydroxylysine residues in collagen and elastin, resulting in the formation of covalent cross-linkages, and the stabilization of collagen and elastin fibers. This Homo sapiens (Human) protein is Lysyl oxidase homolog 4 (LOXL4).